The sequence spans 402 residues: Lipid-A-disaccharide synthase (402 aa).

It belongs to the LpxB family.

The enzyme catalyses a lipid X + a UDP-2-N,3-O-bis[(3R)-3-hydroxyacyl]-alpha-D-glucosamine = a lipid A disaccharide + UDP + H(+). It participates in bacterial outer membrane biogenesis; LPS lipid A biosynthesis. Functionally, condensation of UDP-2,3-diacylglucosamine and 2,3-diacylglucosamine-1-phosphate to form lipid A disaccharide, a precursor of lipid A, a phosphorylated glycolipid that anchors the lipopolysaccharide to the outer membrane of the cell. The sequence is that of Lipid-A-disaccharide synthase from Cupriavidus pinatubonensis (strain JMP 134 / LMG 1197) (Cupriavidus necator (strain JMP 134)).